Consider the following 148-residue polypeptide: Transcription antitermination protein NusB (148 aa).

The protein belongs to the NusB family.

Functionally, involved in transcription antitermination. Required for transcription of ribosomal RNA (rRNA) genes. Binds specifically to the boxA antiterminator sequence of the ribosomal RNA (rrn) operons. This is Transcription antitermination protein NusB from Nitrosococcus oceani (strain ATCC 19707 / BCRC 17464 / JCM 30415 / NCIMB 11848 / C-107).